We begin with the raw amino-acid sequence, 156 residues long: ATP synthase subunit b (156 aa).

A helical transmembrane segment spans residues 7–27 (LIGQTVAFIIFVWFCMKFVWP).

Belongs to the ATPase B chain family. F-type ATPases have 2 components, F(1) - the catalytic core - and F(0) - the membrane proton channel. F(1) has five subunits: alpha(3), beta(3), gamma(1), delta(1), epsilon(1). F(0) has three main subunits: a(1), b(2) and c(10-14). The alpha and beta chains form an alternating ring which encloses part of the gamma chain. F(1) is attached to F(0) by a central stalk formed by the gamma and epsilon chains, while a peripheral stalk is formed by the delta and b chains.

The protein localises to the cell inner membrane. F(1)F(0) ATP synthase produces ATP from ADP in the presence of a proton or sodium gradient. F-type ATPases consist of two structural domains, F(1) containing the extramembraneous catalytic core and F(0) containing the membrane proton channel, linked together by a central stalk and a peripheral stalk. During catalysis, ATP synthesis in the catalytic domain of F(1) is coupled via a rotary mechanism of the central stalk subunits to proton translocation. In terms of biological role, component of the F(0) channel, it forms part of the peripheral stalk, linking F(1) to F(0). The protein is ATP synthase subunit b of Shewanella baltica (strain OS155 / ATCC BAA-1091).